The sequence spans 65 residues: Large ribosomal subunit protein bL35 (65 aa).

It belongs to the bacterial ribosomal protein bL35 family.

In Thermotoga neapolitana (strain ATCC 49049 / DSM 4359 / NBRC 107923 / NS-E), this protein is Large ribosomal subunit protein bL35.